We begin with the raw amino-acid sequence, 249 residues long: Isoprenyl transferase (249 aa).

Asp-25 is an active-site residue. Asp-25 contributes to the Mg(2+) binding site. Substrate-binding positions include 26–29, Trp-30, Arg-38, His-42, and 70–72; these read GNGR and STE. Catalysis depends on Asn-73, which acts as the Proton acceptor. Substrate-binding positions include Trp-74, Arg-76, Arg-197, and 203–205; that span reads RLS. Glu-216 serves as a coordination point for Mg(2+).

It belongs to the UPP synthase family. Homodimer. The cofactor is Mg(2+).

Its function is as follows. Catalyzes the condensation of isopentenyl diphosphate (IPP) with allylic pyrophosphates generating different type of terpenoids. The chain is Isoprenyl transferase from Streptococcus thermophilus (strain CNRZ 1066).